The sequence spans 222 residues: Probable transaldolase (222 aa).

The active-site Schiff-base intermediate with substrate is the K91.

This sequence belongs to the transaldolase family. Type 3B subfamily.

The protein localises to the cytoplasm. It carries out the reaction D-sedoheptulose 7-phosphate + D-glyceraldehyde 3-phosphate = D-erythrose 4-phosphate + beta-D-fructose 6-phosphate. The protein operates within carbohydrate degradation; pentose phosphate pathway; D-glyceraldehyde 3-phosphate and beta-D-fructose 6-phosphate from D-ribose 5-phosphate and D-xylulose 5-phosphate (non-oxidative stage): step 2/3. Functionally, transaldolase is important for the balance of metabolites in the pentose-phosphate pathway. This is Probable transaldolase from Chlorobium luteolum (strain DSM 273 / BCRC 81028 / 2530) (Pelodictyon luteolum).